The following is a 442-amino-acid chain: Glutamate-1-semialdehyde 2,1-aminomutase (442 aa).

K282 carries the post-translational modification N6-(pyridoxal phosphate)lysine.

This sequence belongs to the class-III pyridoxal-phosphate-dependent aminotransferase family. HemL subfamily. In terms of assembly, homodimer. It depends on pyridoxal 5'-phosphate as a cofactor.

It is found in the cytoplasm. It catalyses the reaction (S)-4-amino-5-oxopentanoate = 5-aminolevulinate. The protein operates within porphyrin-containing compound metabolism; protoporphyrin-IX biosynthesis; 5-aminolevulinate from L-glutamyl-tRNA(Glu): step 2/2. The protein is Glutamate-1-semialdehyde 2,1-aminomutase of Polaromonas naphthalenivorans (strain CJ2).